The following is a 578-amino-acid chain: Arginine--tRNA ligase (578 aa).

Positions 127–137 (PNLAKEMHVGH) match the 'HIGH' region motif.

It belongs to the class-I aminoacyl-tRNA synthetase family. As to quaternary structure, monomer.

The protein localises to the cytoplasm. It catalyses the reaction tRNA(Arg) + L-arginine + ATP = L-arginyl-tRNA(Arg) + AMP + diphosphate. This is Arginine--tRNA ligase from Pseudomonas fluorescens (strain SBW25).